Here is a 215-residue protein sequence, read N- to C-terminus: Peptide methionine sulfoxide reductase MsrA (215 aa).

Residue Cys57 is part of the active site.

The protein belongs to the MsrA Met sulfoxide reductase family.

The catalysed reaction is L-methionyl-[protein] + [thioredoxin]-disulfide + H2O = L-methionyl-(S)-S-oxide-[protein] + [thioredoxin]-dithiol. The enzyme catalyses [thioredoxin]-disulfide + L-methionine + H2O = L-methionine (S)-S-oxide + [thioredoxin]-dithiol. Its function is as follows. Has an important function as a repair enzyme for proteins that have been inactivated by oxidation. Catalyzes the reversible oxidation-reduction of methionine sulfoxide in proteins to methionine. This is Peptide methionine sulfoxide reductase MsrA from Saccharophagus degradans (strain 2-40 / ATCC 43961 / DSM 17024).